The primary structure comprises 62 residues: uncharacterized protein (62 aa).

Residues 1-26 (MGELAASANHGHSPCYPERKGTPGDL) are disordered. The span at 17-26 (PERKGTPGDL) shows a compositional bias: basic and acidic residues.

This is an uncharacterized protein from Homo sapiens (Human).